The following is a 159-amino-acid chain: UPF0262 protein CCNA_02430 (159 aa).

It belongs to the UPF0262 family.

This chain is UPF0262 protein CCNA_02430, found in Caulobacter vibrioides (strain NA1000 / CB15N) (Caulobacter crescentus).